The chain runs to 475 residues: Aminodeoxychorismate synthase component 1 (475 aa).

Belongs to the anthranilate synthase component I family. Monomer. Heterodimer consisting of two non-identical subunits: a glutamine amidotransferase subunit (PabA) and a aminodeoxychorismate synthase subunit (PabB). Requires Mg(2+) as cofactor.

It catalyses the reaction chorismate + L-glutamine = 4-amino-4-deoxychorismate + L-glutamate. It functions in the pathway cofactor biosynthesis; tetrahydrofolate biosynthesis; 4-aminobenzoate from chorismate: step 1/2. In terms of biological role, part of a heterodimeric complex that catalyzes the two-step biosynthesis of 4-amino-4-deoxychorismate (ADC), a precursor of p-aminobenzoate (PABA) and tetrahydrofolate. In the first step, a glutamine amidotransferase (PabA) generates ammonia as a substrate that, along with chorismate, is used in the second step, catalyzed by aminodeoxychorismate synthase (PabB) to produce ADC. In Streptomyces lividans, this protein is Aminodeoxychorismate synthase component 1 (pabB).